A 367-amino-acid polypeptide reads, in one-letter code: Peptide chain release factor 2 (367 aa).

Gln-249 bears the N5-methylglutamine mark.

Belongs to the prokaryotic/mitochondrial release factor family. In terms of processing, methylated by PrmC. Methylation increases the termination efficiency of RF2.

It is found in the cytoplasm. Functionally, peptide chain release factor 2 directs the termination of translation in response to the peptide chain termination codons UGA and UAA. The chain is Peptide chain release factor 2 from Thermotoga petrophila (strain ATCC BAA-488 / DSM 13995 / JCM 10881 / RKU-1).